Here is a 317-residue protein sequence, read N- to C-terminus: Beta-ketoacyl-[acyl-carrier-protein] synthase III (317 aa).

Catalysis depends on residues C112 and H244. An ACP-binding region spans residues 245 to 249; that stretch reads QANLR. N274 is an active-site residue.

This sequence belongs to the thiolase-like superfamily. FabH family. As to quaternary structure, homodimer.

The protein localises to the cytoplasm. It carries out the reaction malonyl-[ACP] + acetyl-CoA + H(+) = 3-oxobutanoyl-[ACP] + CO2 + CoA. It functions in the pathway lipid metabolism; fatty acid biosynthesis. Catalyzes the condensation reaction of fatty acid synthesis by the addition to an acyl acceptor of two carbons from malonyl-ACP. Catalyzes the first condensation reaction which initiates fatty acid synthesis and may therefore play a role in governing the total rate of fatty acid production. Possesses both acetoacetyl-ACP synthase and acetyl transacylase activities. Its substrate specificity determines the biosynthesis of branched-chain and/or straight-chain of fatty acids. This is Beta-ketoacyl-[acyl-carrier-protein] synthase III from Salmonella typhimurium (strain LT2 / SGSC1412 / ATCC 700720).